A 380-amino-acid chain; its full sequence is L-prolyl-[peptidyl-carrier protein] dehydrogenase (380 aa).

The active-site Proton acceptor is Glu243. FAD is bound by residues Arg269 and Gln280.

Belongs to the acyl-CoA dehydrogenase family. Requires FAD as cofactor.

It carries out the reaction L-prolyl-[peptidyl-carrier protein] + 2 oxidized [electron-transfer flavoprotein] + H(+) = (1H-pyrrole-2-carbonyl)-[peptidyl-carrier protein] + 2 reduced [electron-transfer flavoprotein]. In terms of biological role, involved in the biosynthesis of pyoluteorin. Catalyzes the desaturation of the L-prolyl-[PltL] to yield 1H-pyrrole-2-carbonyl-[PltL]. The chain is L-prolyl-[peptidyl-carrier protein] dehydrogenase from Pseudomonas fluorescens (strain ATCC BAA-477 / NRRL B-23932 / Pf-5).